A 96-amino-acid chain; its full sequence is Aspartyl/glutamyl-tRNA(Asn/Gln) amidotransferase subunit C (96 aa).

This sequence belongs to the GatC family. Heterotrimer of A, B and C subunits.

The enzyme catalyses L-glutamyl-tRNA(Gln) + L-glutamine + ATP + H2O = L-glutaminyl-tRNA(Gln) + L-glutamate + ADP + phosphate + H(+). It catalyses the reaction L-aspartyl-tRNA(Asn) + L-glutamine + ATP + H2O = L-asparaginyl-tRNA(Asn) + L-glutamate + ADP + phosphate + 2 H(+). In terms of biological role, allows the formation of correctly charged Asn-tRNA(Asn) or Gln-tRNA(Gln) through the transamidation of misacylated Asp-tRNA(Asn) or Glu-tRNA(Gln) in organisms which lack either or both of asparaginyl-tRNA or glutaminyl-tRNA synthetases. The reaction takes place in the presence of glutamine and ATP through an activated phospho-Asp-tRNA(Asn) or phospho-Glu-tRNA(Gln). This is Aspartyl/glutamyl-tRNA(Asn/Gln) amidotransferase subunit C from Chloroflexus aurantiacus (strain ATCC 29366 / DSM 635 / J-10-fl).